The chain runs to 336 residues: Gastrula zinc finger protein XlCGF57.1 (336 aa).

11 C2H2-type zinc fingers span residues 6–28 (YTCT…MKIH), 34–56 (FICT…MKTH), 62–84 (FTCT…LTIH), 90–112 (FSCT…MKTH), 118–140 (FTCT…MKTH), 146–168 (FTCT…LKIH), 174–196 (FTCT…LKIH), 202–224 (FTCT…MKIH), 230–252 (FSCT…LTMH), 258–280 (FTCT…TKIH), and 286–308 (FSCT…LKIH).

Belongs to the krueppel C2H2-type zinc-finger protein family.

The protein resides in the nucleus. Functionally, may be involved in transcriptional regulation. The sequence is that of Gastrula zinc finger protein XlCGF57.1 from Xenopus laevis (African clawed frog).